The sequence spans 64 residues: Gallinacin-2 (64 aa).

Residues 1–22 (MRILYLLFSLLFLALQVSPGLS) form the signal peptide. The propeptide occupies 23–28 (SPRRDM). Disulfide bonds link Cys-31–Cys-57, Cys-36–Cys-51, and Cys-41–Cys-58.

In terms of tissue distribution, expressed in circulating heterophil granulocytes and bone marrow (at protein level). Strong expression in the bone marrow, lung and testis. Moderate expression in the bursa and intestine. Low expression in the cloaca, gall bladder, brain, pancreas, trachea, air sacs and spleen. Expressed in the vagina, ovarian stroma and the theca layer of the ovarian follicle, but not in the granulosa layer of the ovarian follicle.

The protein localises to the secreted. The protein resides in the cytoplasmic granule. In terms of biological role, potent antibacterial activity against the Gram-negative bacterium E.coli ML-35, and against the Gram-positive bacterium L.monocytogenes EGD. Lacks antifungal activity against C.albicans. This chain is Gallinacin-2 (GAL2), found in Gallus gallus (Chicken).